The following is a 228-amino-acid chain: Auxin-responsive protein IAA14 (228 aa).

Residues 8-12 (LCLGL) carry the EAR-like (transcriptional repression) motif. A PB1 domain is found at 110–210 (VAFVKVSMDG…SCKRLRIMKG (101 aa)).

Belongs to the Aux/IAA family. In terms of assembly, homodimers and heterodimers. Interacts with TPL. As to expression, preferentially expressed in roots and flowers.

It localises to the nucleus. Functionally, aux/IAA proteins are short-lived transcriptional factors that function as repressors of early auxin response genes at low auxin concentrations. Repression is thought to result from the interaction with auxin response factors (ARFs), proteins that bind to the auxin-responsive promoter element (AuxRE). Formation of heterodimers with ARF proteins may alter their ability to modulate early auxin response genes expression. This Arabidopsis thaliana (Mouse-ear cress) protein is Auxin-responsive protein IAA14 (IAA14).